The sequence spans 385 residues: Putative actin-25 (385 aa).

This sequence belongs to the actin family.

The protein localises to the cytoplasm. Its subcellular location is the cytoskeleton. It carries out the reaction ATP + H2O = ADP + phosphate + H(+). Actins are highly conserved proteins that are involved in various types of cell motility and are ubiquitously expressed in all eukaryotic cells. Multiple isoforms are involved in various cellular functions such as cytoskeleton structure, cell mobility, chromosome movement and muscle contraction. This is Putative actin-25 (act25) from Dictyostelium discoideum (Social amoeba).